Here is an 85-residue protein sequence, read N- to C-terminus: Cloacin immunity protein (85 aa).

Lysine 12 carries the N6-methyllysine modification.

Belongs to the cloacin immunity protein family.

Its function is as follows. This protein complexes with cloacin protein in equimolar amounts and inhibits it by binding with high affinity to the C-terminal catalytic domain of cloacin. This chain is Cloacin immunity protein (cim), found in Escherichia coli.